Consider the following 424-residue polypeptide: Delta(14)-sterol reductase erg24 (424 aa).

2 consecutive transmembrane segments (helical) span residues 19 to 39 (IGAL…FYIC) and 112 to 132 (LILG…MEFI). NADP(+)-binding positions include lysine 317, arginine 321, leucine 344, tryptophan 349, and 356-357 (NY). A helical membrane pass occupies residues 370–390 (PAGFGSPIPYFYVAYFGVLLV). Residues aspartate 396, 400–404 (CRVKY), and tyrosine 411 each bind NADP(+).

The protein belongs to the ERG4/ERG24 family.

It localises to the endoplasmic reticulum membrane. It carries out the reaction 4,4-dimethyl-5alpha-cholesta-8,24-dien-3beta-ol + NADP(+) = 4,4-dimethyl-5alpha-cholesta-8,14,24-trien-3beta-ol + NADPH + H(+). The protein operates within steroid biosynthesis; zymosterol biosynthesis; zymosterol from lanosterol: step 2/6. It functions in the pathway steroid metabolism; ergosterol biosynthesis. Its function is as follows. Delta(14)-sterol reductase; part of the third module of ergosterol biosynthesis pathway that includes by the late steps of the pathway. Erg24 reduces the C14=C15 double bond of 4,4-dimethyl-cholesta-8,14,24-trienol to produce 4,4-dimethyl-cholesta-8,24-dienol. The third module or late pathway involves the ergosterol synthesis itself through consecutive reactions that mainly occur in the endoplasmic reticulum (ER) membrane. Firstly, the squalene synthase erg9 catalyzes the condensation of 2 farnesyl pyrophosphate moieties to form squalene, which is the precursor of all steroids. Secondly, squalene is converted into lanosterol by the consecutive action of the squalene epoxidase erg1 and the lanosterol synthase erg7. The lanosterol 14-alpha-demethylase erg11/cyp1 catalyzes C14-demethylation of lanosterol to produce 4,4'-dimethyl cholesta-8,14,24-triene-3-beta-ol. In the next steps, a complex process involving various demethylation, reduction and desaturation reactions catalyzed by the C-14 reductase erg24 and the C-4 demethylation complex erg25-erg26-erg27 leads to the production of zymosterol. Erg28 likely functions in the C-4 demethylation complex reaction by tethering erg26 and Erg27 to the endoplasmic reticulum or to facilitate interaction between these proteins. Then, the sterol 24-C-methyltransferase erg6 catalyzes the methyl transfer from S-adenosyl-methionine to the C-24 of zymosterol to form fecosterol. The C-8 sterol isomerase erg2 catalyzes the reaction which results in unsaturation at C-7 in the B ring of sterols and thus converts fecosterol to episterol. The sterol-C5-desaturases erg31 and erg32 then catalyze the introduction of a C-5 double bond in the B ring to produce 5-dehydroepisterol. The C-22 sterol desaturase erg5 further converts 5-dehydroepisterol into ergosta-5,7,22,24(28)-tetraen-3beta-ol by forming the C-22(23) double bond in the sterol side chain. Finally, ergosta-5,7,22,24(28)-tetraen-3beta-ol is substrate of the C-24(28) sterol reductase erg4 to produce ergosterol. In the genus Schizosaccharomyces, a second route exists between lanosterol and fecosterol, via the methylation of lanosterol to eburicol by erg6, followed by C14-demethylation by erg11/cyp1 and C4-demethylation by the demethylation complex erg25-erg26-erg27. The chain is Delta(14)-sterol reductase erg24 from Schizosaccharomyces pombe (strain 972 / ATCC 24843) (Fission yeast).